The sequence spans 382 residues: Chaperone protein DnaJ (382 aa).

The J domain occupies 5–69 (DLYGVLGVAK…QKRANYDQSG (65 aa)). Residues 104–123 (QFFGGGGGQRNPNAPRPGRD) form a disordered region. The segment at 138-220 (GKKTKIKYNR…CGGSGHEEER (83 aa)) adopts a CR-type zinc-finger fold. Cys-151, Cys-154, Cys-168, Cys-171, Cys-194, Cys-197, Cys-208, and Cys-211 together coordinate Zn(2+). CXXCXGXG motif repeat units follow at residues 151 to 158 (CHTCGGNG), 168 to 175 (CHQCGGSG), 194 to 201 (CPVCHGTG), and 208 to 215 (CPTCGGSG). The tract at residues 358–382 (ASGESVTGSGKGNLFNKMRDKFNEN) is disordered.

It belongs to the DnaJ family. Homodimer. It depends on Zn(2+) as a cofactor.

Its subcellular location is the cytoplasm. Functionally, participates actively in the response to hyperosmotic and heat shock by preventing the aggregation of stress-denatured proteins and by disaggregating proteins, also in an autonomous, DnaK-independent fashion. Unfolded proteins bind initially to DnaJ; upon interaction with the DnaJ-bound protein, DnaK hydrolyzes its bound ATP, resulting in the formation of a stable complex. GrpE releases ADP from DnaK; ATP binding to DnaK triggers the release of the substrate protein, thus completing the reaction cycle. Several rounds of ATP-dependent interactions between DnaJ, DnaK and GrpE are required for fully efficient folding. Also involved, together with DnaK and GrpE, in the DNA replication of plasmids through activation of initiation proteins. This Levilactobacillus brevis (strain ATCC 367 / BCRC 12310 / CIP 105137 / JCM 1170 / LMG 11437 / NCIMB 947 / NCTC 947) (Lactobacillus brevis) protein is Chaperone protein DnaJ.